Consider the following 196-residue polypeptide: Thymidine kinase (196 aa).

ATP is bound at residue 17–24 (GPMFAGKT). Residue Glu92 is the Proton acceptor of the active site. Phe121 serves as a coordination point for substrate. Cys146 and Cys149 together coordinate Zn(2+). 166-170 (LILAG) is a binding site for substrate. 2 residues coordinate Zn(2+): Cys179 and Cys182.

This sequence belongs to the thymidine kinase family.

The enzyme catalyses thymidine + ATP = dTMP + ADP + H(+). Its function is as follows. Phosphorylates thymidine. ASFV replicates in the cytoplasm of infected cells and contains genes encoding a number of enzymes needed for DNA synthesis, including thymidine kinase. Important for growth in swine macrophages in vitro and is a virus virulence factor in swine. The chain is Thymidine kinase from African swine fever virus (strain Badajoz 1971 Vero-adapted) (Ba71V).